A 536-amino-acid polypeptide reads, in one-letter code: Aminopeptidase (536 aa).

An N-terminal signal peptide occupies residues 1–24; the sequence is MSNKNNLRYALGALALSVSAASLA. The region spanning 152-255 is the PA domain; it reads AGDVTAKVVP…ATYDNGVAWS (104 aa). Position 196 is a phosphothreonine (threonine 196). Zn(2+) contacts are provided by histidine 296 and aspartate 308. Catalysis depends on glutamate 340, which acts as the Proton acceptor. Zn(2+) is bound by residues glutamate 341, aspartate 369, and histidine 467. Cysteines 465 and 470 form a disulfide.

The protein belongs to the peptidase M28 family. M28A subfamily. Zn(2+) is required as a cofactor.

Its subcellular location is the secreted. The enzyme catalyses Release of an N-terminal amino acid, Xaa-|-Yaa-, in which Xaa is preferably Leu, but may be other amino acids including Pro although not Arg or Lys, and Yaa may be Pro. Amino acid amides and methyl esters are also readily hydrolyzed, but rates on arylamides are exceedingly low.. In terms of biological role, a secreted aminopeptidase. Acts on free N-terminal amino groups with a very strong preference for Leu in the first position. In Pseudomonas aeruginosa (strain UCBPP-PA14), this protein is Aminopeptidase.